Here is a 198-residue protein sequence, read N- to C-terminus: Recombination protein RecR (198 aa).

Residues 57 to 72 (CSICGNITEEDPCEIC) form a C4-type zinc finger. A Toprim domain is found at 80-175 (SIILVVEEPK…TVTRLAHGLS (96 aa)).

Belongs to the RecR family.

May play a role in DNA repair. It seems to be involved in an RecBC-independent recombinational process of DNA repair. It may act with RecF and RecO. The sequence is that of Recombination protein RecR from Enterococcus faecalis (strain ATCC 700802 / V583).